The sequence spans 130 residues: Small ribosomal subunit protein uS9 (130 aa).

The protein belongs to the universal ribosomal protein uS9 family.

The chain is Small ribosomal subunit protein uS9 from Ectopseudomonas mendocina (strain ymp) (Pseudomonas mendocina).